The primary structure comprises 79 residues: Protein SIP18 (79 aa).

The interval 1-79 is disordered; the sequence is MSNMMNKFAE…DWKTYENMKK (79 aa). A compositionally biased stretch (basic and acidic residues) spans 8–20; sequence FAEKLQGNDDSHQ.

This is Protein SIP18 (SIP18) from Saccharomyces cerevisiae (strain ATCC 204508 / S288c) (Baker's yeast).